The sequence spans 194 residues: Histone H1.0 (194 aa).

At Met1 the chain carries N-acetylmethionine. Over residues 1–11 (MTENSTSAPAA) the composition is skewed to low complexity. The tract at residues 1–29 (MTENSTSAPAAKPKRAKASKKSTDHPKYS) is disordered. An N-acetylthreonine; partial; in Histone H1.0, N-terminally processed modification is found at Thr2. Deamidated asparagine; partial is present on Asn4. Residues 24–97 (DHPKYSDMIV…GASGSFRLAK (74 aa)) enclose the H15 domain. At Arg42 the chain carries Citrulline. Residues 84-194 (TKGVGASGSF…SSAKRAGKKK (111 aa)) are disordered. ADP-ribosylserine is present on Ser104. Positions 105–194 (VAFKKTKKEI…SSAKRAGKKK (90 aa)) are enriched in basic residues.

It belongs to the histone H1/H5 family. Post-translationally, phosphorylated on Ser-17 in RNA edited version. In terms of processing, ADP-ribosylated on Ser-104 in response to DNA damage.

The protein localises to the nucleus. Its subcellular location is the chromosome. Functionally, histones H1 are necessary for the condensation of nucleosome chains into higher-order structures. The histones H1.0 are found in cells that are in terminal stages of differentiation or that have low rates of cell division. The chain is Histone H1.0 from Homo sapiens (Human).